The chain runs to 505 residues: Maturase K (505 aa).

Belongs to the intron maturase 2 family. MatK subfamily.

The protein resides in the plastid. It localises to the chloroplast. Functionally, usually encoded in the trnK tRNA gene intron. Probably assists in splicing its own and other chloroplast group II introns. This chain is Maturase K, found in Idiospermum australiense (Ribbonwood tree).